A 194-amino-acid polypeptide reads, in one-letter code: Clathrin light chain (194 aa).

Positions 44–156 (TTFDNSNNNN…TDSTSGNTTH (113 aa)) are disordered. The span at 48-65 (NSNNNNNNNNHNNNSYNS) shows a compositional bias: low complexity. 2 stretches are compositionally biased toward basic and acidic residues: residues 89 to 115 (EYLE…KIAE) and 124 to 146 (YSER…KSLE). The interval 124–194 (YSEREAKKKT…LIRLKNQPIV (71 aa)) is required for binding clathrin heavy chain, localization to punctae, and for cytokinesis and fruiting body development. Residues 147-156 (TDSTSGNTTH) show a composition bias toward polar residues.

It belongs to the clathrin light chain family. As to quaternary structure, clathrin coats are formed from molecules containing 3 heavy chains and 3 light chains.

Its subcellular location is the cytoplasmic vesicle membrane. The protein localises to the membrane. It is found in the coated pit. Clathrin is the major protein of the polyhedral coat of coated pits and vesicles. This is Clathrin light chain (clc) from Dictyostelium discoideum (Social amoeba).